A 320-amino-acid chain; its full sequence is Zygote arrest protein 1 (320 aa).

2 disordered regions span residues 106–130 (ELRR…EVRY) and 155–208 (DRPA…AEGS). The 3CxxC-type zinc-finger motif lies at 222 to 305 (KYGYYHCREC…RQDLCGRCKG (84 aa)).

It belongs to the ZAR1 family.

It is found in the cytoplasm. Its subcellular location is the cytoplasmic ribonucleoprotein granule. Its function is as follows. mRNA-binding protein required for maternal mRNA storage, translation and degradation during oocyte maturation. Probably promotes formation of some phase-separated membraneless compartment that stores maternal mRNAs in oocytes: acts by undergoing liquid-liquid phase separation upon binding to maternal mRNAs. Binds to the 3'-UTR of maternal mRNAs, inhibiting their translation. The chain is Zygote arrest protein 1 from Takifugu rubripes (Japanese pufferfish).